The primary structure comprises 335 residues: Large ribosomal subunit protein uL3 (335 aa).

Disordered regions lie at residues 1–35, 234–256, and 312–335; these read MPQP…ADDG, IGNL…GQTG, and AVRP…SNQG. The segment covering 244–256 has biased composition (polar residues); it reads RVRSTVPQQGQTG.

The protein belongs to the universal ribosomal protein uL3 family. Part of the 50S ribosomal subunit. Forms a cluster with proteins L14 and L24e.

Its function is as follows. One of the primary rRNA binding proteins, it binds directly near the 3'-end of the 23S rRNA, where it nucleates assembly of the 50S subunit. The sequence is that of Large ribosomal subunit protein uL3 from Halobacterium salinarum (strain ATCC 29341 / DSM 671 / R1).